We begin with the raw amino-acid sequence, 490 residues long: UDP-N-acetylmuramoylalanine--D-glutamate ligase (490 aa).

124–130 (GTNGKTT) contributes to the ATP binding site.

The protein belongs to the MurCDEF family.

It localises to the cytoplasm. The enzyme catalyses UDP-N-acetyl-alpha-D-muramoyl-L-alanine + D-glutamate + ATP = UDP-N-acetyl-alpha-D-muramoyl-L-alanyl-D-glutamate + ADP + phosphate + H(+). It functions in the pathway cell wall biogenesis; peptidoglycan biosynthesis. In terms of biological role, cell wall formation. Catalyzes the addition of glutamate to the nucleotide precursor UDP-N-acetylmuramoyl-L-alanine (UMA). The protein is UDP-N-acetylmuramoylalanine--D-glutamate ligase (murD) of Mycobacterium leprae (strain TN).